The primary structure comprises 408 residues: Peptidase T (408 aa).

Position 78 (His78) interacts with Zn(2+). Asp80 is an active-site residue. Residue Asp140 coordinates Zn(2+). Glu173 acts as the Proton acceptor in catalysis. Zn(2+) contacts are provided by Glu174, Asp196, and His379.

This sequence belongs to the peptidase M20B family. The cofactor is Zn(2+).

It localises to the cytoplasm. It catalyses the reaction Release of the N-terminal residue from a tripeptide.. Cleaves the N-terminal amino acid of tripeptides. This chain is Peptidase T, found in Escherichia coli (strain UTI89 / UPEC).